The following is a 111-amino-acid chain: Phosphoribosyl-ATP pyrophosphatase (111 aa).

This sequence belongs to the PRA-PH family.

The protein resides in the cytoplasm. It carries out the reaction 1-(5-phospho-beta-D-ribosyl)-ATP + H2O = 1-(5-phospho-beta-D-ribosyl)-5'-AMP + diphosphate + H(+). It functions in the pathway amino-acid biosynthesis; L-histidine biosynthesis; L-histidine from 5-phospho-alpha-D-ribose 1-diphosphate: step 2/9. The protein is Phosphoribosyl-ATP pyrophosphatase of Ectopseudomonas mendocina (strain ymp) (Pseudomonas mendocina).